The primary structure comprises 565 residues: Galactoside 2-alpha-L-fucosyltransferase (565 aa).

Residues 1–43 lie on the Cytoplasmic side of the membrane; it reads MNMLIKRVIAIKNPRGDDNNNNKLSDLETLTDKCTTCPLTLMR. A helical; Signal-anchor for type II membrane protein transmembrane segment spans residues 44-64; that stretch reads VMAFFVVSFMLFSVLFSLSVV. Over 65-565 the chain is Lumenal; that stretch reads LRDPPSDAAI…MSWGLKLVDN (501 aa). N-linked (GlcNAc...) asparagine glycosylation is found at Asn-159, Asn-263, Asn-407, and Asn-509.

This sequence belongs to the glycosyltransferase 37 family.

It localises to the golgi apparatus. The protein resides in the golgi stack membrane. It participates in protein modification; protein glycosylation. In terms of biological role, involved in cell wall biosynthesis. Adds the terminal fucosyl residue on xyloglucan side chains. In Pisum sativum (Garden pea), this protein is Galactoside 2-alpha-L-fucosyltransferase (FT1).